Consider the following 337-residue polypeptide: Inositol 2-dehydrogenase (337 aa).

The protein belongs to the Gfo/Idh/MocA family. In terms of assembly, homotetramer.

It catalyses the reaction myo-inositol + NAD(+) = scyllo-inosose + NADH + H(+). Functionally, involved in the oxidation of myo-inositol (MI) to 2-keto-myo-inositol (2KMI or 2-inosose). The polypeptide is Inositol 2-dehydrogenase (Corynebacterium glutamicum (strain R)).